Consider the following 296-residue polypeptide: Acetylglutamate kinase (296 aa).

Residues 65–66, arginine 87, and asparagine 190 each bind substrate; that span reads GG.

This sequence belongs to the acetylglutamate kinase family. ArgB subfamily.

It localises to the cytoplasm. The enzyme catalyses N-acetyl-L-glutamate + ATP = N-acetyl-L-glutamyl 5-phosphate + ADP. Its pathway is amino-acid biosynthesis; L-arginine biosynthesis; N(2)-acetyl-L-ornithine from L-glutamate: step 2/4. In terms of biological role, catalyzes the ATP-dependent phosphorylation of N-acetyl-L-glutamate. The chain is Acetylglutamate kinase from Moorella thermoacetica (strain ATCC 39073 / JCM 9320).